Here is a 208-residue protein sequence, read N- to C-terminus: Uracil phosphoribosyltransferase (208 aa).

5-phospho-alpha-D-ribose 1-diphosphate-binding positions include arginine 78, arginine 103, and 130-138; that span reads DPMLATGGS. Uracil is bound by residues isoleucine 193 and 198–200; that span reads GDA. Position 199 (aspartate 199) interacts with 5-phospho-alpha-D-ribose 1-diphosphate.

It belongs to the UPRTase family. Requires Mg(2+) as cofactor.

It carries out the reaction UMP + diphosphate = 5-phospho-alpha-D-ribose 1-diphosphate + uracil. The protein operates within pyrimidine metabolism; UMP biosynthesis via salvage pathway; UMP from uracil: step 1/1. With respect to regulation, allosterically activated by GTP. Catalyzes the conversion of uracil and 5-phospho-alpha-D-ribose 1-diphosphate (PRPP) to UMP and diphosphate. This chain is Uracil phosphoribosyltransferase, found in Neisseria meningitidis serogroup C (strain 053442).